The chain runs to 254 residues: Isoprenyl transferase (254 aa).

D23 is an active-site residue. D23 contributes to the Mg(2+) binding site. Substrate is bound by residues 24–27 (GNGR), W28, R36, H40, and 68–70 (STE). N71 serves as the catalytic Proton acceptor. Substrate is bound by residues W72, R74, R191, and 197–199 (RIS). E210 contacts Mg(2+).

Belongs to the UPP synthase family. Homodimer. The cofactor is Mg(2+).

Functionally, catalyzes the condensation of isopentenyl diphosphate (IPP) with allylic pyrophosphates generating different type of terpenoids. The protein is Isoprenyl transferase of Porphyromonas gingivalis (strain ATCC BAA-308 / W83).